We begin with the raw amino-acid sequence, 87 residues long: Small ribosomal subunit protein uS17 (87 aa).

Belongs to the universal ribosomal protein uS17 family. As to quaternary structure, part of the 30S ribosomal subunit.

Functionally, one of the primary rRNA binding proteins, it binds specifically to the 5'-end of 16S ribosomal RNA. This chain is Small ribosomal subunit protein uS17, found in Hydrogenovibrio crunogenus (strain DSM 25203 / XCL-2) (Thiomicrospira crunogena).